A 185-amino-acid chain; its full sequence is Peptidoglycan-recognition protein SC1a/b (185 aa).

A signal peptide spans 1 to 21; that stretch reads MVSKVALLLAVLVCSQYMAQG. Positions 46-170 constitute an N-acetylmuramoyl-L-alanine amidase domain; that stretch reads SYAIIHHTAG…RQVSATECPG (125 aa). Position 51 (His51) interacts with Zn(2+). Cysteines 58 and 64 form a disulfide. Positions 160 and 168 each coordinate Zn(2+).

It belongs to the N-acetylmuramoyl-L-alanine amidase 2 family. Requires Zn(2+) as cofactor.

It is found in the secreted. The catalysed reaction is Hydrolyzes the link between N-acetylmuramoyl residues and L-amino acid residues in certain cell-wall glycopeptides.. Functionally, N-acetylmuramyl-L-alanine amidase involved in innate immunity by degrading bacterial peptidoglycans (PGN). Plays a scavenger role by digesting biologically active PGN into biologically inactive fragments. Has no direct bacteriolytic activity. This is Peptidoglycan-recognition protein SC1a/b (PGRP-SC1a) from Drosophila simulans (Fruit fly).